We begin with the raw amino-acid sequence, 424 residues long: Choline-phosphate cytidylyltransferase (424 aa).

The disordered stretch occupies residues 1-70; sequence MANPTTGKSS…RKRRRLTKEF (70 aa). The segment covering 14 to 24 has biased composition (low complexity); it reads KLSNSSLSNLF. Position 16 is a phosphoserine (serine 16). Positions 35 to 44 are enriched in acidic residues; the sequence is ETEEQDNEDK. Basic and acidic residues predominate over residues 45–55; the sequence is DESKNQDENKD. The residue at position 59 (threonine 59) is a Phosphothreonine. CTP contacts are provided by residues 111 to 119 and lysine 149; that span reads VFDLFHLGH. Substrate-binding residues include lysine 149 and tryptophan 178. Residues 195–196, tyrosine 200, and 223–227 contribute to the CTP site; these read HD and RTNGV. Phosphoserine is present on serine 346. The segment at 348-424 is disordered; it reads ATEFANEFTG…LTQKKKQSAN (77 aa). The segment covering 381–398 has biased composition (low complexity); the sequence is NSNNTNTNSDSDSNTNST. At serine 401 the chain carries Phosphoserine; by CK2.

This sequence belongs to the cytidylyltransferase family.

The protein localises to the membrane. The catalysed reaction is phosphocholine + CTP + H(+) = CDP-choline + diphosphate. Its pathway is phospholipid metabolism; phosphatidylcholine biosynthesis; phosphatidylcholine from phosphocholine: step 1/2. Its function is as follows. Catalyzes the key rate-limiting step in the CDP-choline pathway for phosphatidylcholine biosynthesis. This is Choline-phosphate cytidylyltransferase (PCT1) from Saccharomyces cerevisiae (strain ATCC 204508 / S288c) (Baker's yeast).